We begin with the raw amino-acid sequence, 351 residues long: Phosphoribosylformylglycinamidine cyclo-ligase (351 aa).

It belongs to the AIR synthase family.

It is found in the cytoplasm. It carries out the reaction 2-formamido-N(1)-(5-O-phospho-beta-D-ribosyl)acetamidine + ATP = 5-amino-1-(5-phospho-beta-D-ribosyl)imidazole + ADP + phosphate + H(+). The protein operates within purine metabolism; IMP biosynthesis via de novo pathway; 5-amino-1-(5-phospho-D-ribosyl)imidazole from N(2)-formyl-N(1)-(5-phospho-D-ribosyl)glycinamide: step 2/2. In Burkholderia pseudomallei (strain 1710b), this protein is Phosphoribosylformylglycinamidine cyclo-ligase.